A 227-amino-acid chain; its full sequence is Small ribosomal subunit protein uS3m (227 aa).

Belongs to the universal ribosomal protein uS3 family. Component of the mitochondrial small ribosomal subunit (mt-SSU). Mature yeast 74S mitochondrial ribosomes consist of a small (37S) and a large (54S) subunit. The 37S small subunit contains a 15S ribosomal RNA (15S mt-rRNA) and at least 32 different proteins. The 54S large subunit contains a 21S rRNA (21S mt-rRNA) and at least 45 different proteins. uS3m, uS4m and uS5m form the narrow entry site of the mRNA channel.

The protein resides in the mitochondrion. Essential for mitochondrial protein synthesis and required for the maturation of small ribosomal subunits. Its function is as follows. Component of the mitochondrial ribosome (mitoribosome), a dedicated translation machinery responsible for the synthesis of mitochondrial genome-encoded proteins, including at least some of the essential transmembrane subunits of the mitochondrial respiratory chain. The mitoribosomes are attached to the mitochondrial inner membrane and translation products are cotranslationally integrated into the membrane. uS3m is essential for mitochondrial protein synthesis and required for the maturation of small ribosomal subunits. The sequence is that of Small ribosomal subunit protein uS3m (var1) from Schizosaccharomyces pombe (strain 972 / ATCC 24843) (Fission yeast).